The primary structure comprises 146 residues: Keratin-associated protein 4-1 (146 aa).

A run of 18 repeats spans residues 5 to 9, 24 to 28, 29 to 33, 34 to 38, 44 to 48, 54 to 58, 59 to 63, 64 to 68, 69 to 73, 83 to 87, 88 to 92, 102 to 106, 107 to 111, 121 to 125, 126 to 130, 131 to 135, 136 to 140, and 141 to 145. Residues 5–145 form an 18 X 5 AA repeats of C-C-[GRQC]-[SPT]-[VSTL] region; that stretch reads CCGSVCSDQG…CCRPSCCGSS (141 aa).

The protein belongs to the KRTAP type 4 family. Interacts with hair keratins. As to expression, expressed in the hair follicles.

Its function is as follows. In the hair cortex, hair keratin intermediate filaments are embedded in an interfilamentous matrix, consisting of hair keratin-associated proteins (KRTAP), which are essential for the formation of a rigid and resistant hair shaft through their extensive disulfide bond cross-linking with abundant cysteine residues of hair keratins. The matrix proteins include the high-sulfur and high-glycine-tyrosine keratins. The sequence is that of Keratin-associated protein 4-1 (KRTAP4-1) from Homo sapiens (Human).